Reading from the N-terminus, the 304-residue chain is Glycine--tRNA ligase alpha subunit (304 aa).

This sequence belongs to the class-II aminoacyl-tRNA synthetase family. Tetramer of two alpha and two beta subunits.

The protein resides in the cytoplasm. The enzyme catalyses tRNA(Gly) + glycine + ATP = glycyl-tRNA(Gly) + AMP + diphosphate. This Actinobacillus pleuropneumoniae serotype 3 (strain JL03) protein is Glycine--tRNA ligase alpha subunit.